The following is a 146-amino-acid chain: Outer envelope pore protein 16, chloroplastic (146 aa).

The tract at residues 1 to 73 (MPRSSFSGSL…EKSLKKMCKE (73 aa)) is contains 4 beta strands. 3 helical membrane-spanning segments follow: residues 75–91 (AYWGAIAGVYVGMEYGV), 103–119 (AMFGGAVTGALVSAASN), and 128–146 (DAITGAAIATAAEFINYLT).

Belongs to the Tim17/Tim22/Tim23 family. Plastid outer envelope porin OEP16 (TC 1.B.30) subfamily. As to quaternary structure, homodimer and oligomers in membrane.

It is found in the plastid. The protein localises to the chloroplast outer membrane. It localises to the etioplast membrane. Its function is as follows. Voltage-dependent high-conductance channel with a slight cation-selectivity; selective for amino acids but excludes triosephosphates or uncharged sugars. Non-essential amino acid-selective channel protein and translocation pore for NADPH:protochlorophyllide oxidoreductase A (PORA) and possibly PORB. The protein is Outer envelope pore protein 16, chloroplastic (OEP16) of Pisum sativum (Garden pea).